A 261-amino-acid polypeptide reads, in one-letter code: Signal recognition particle SEC65 subunit (261 aa).

This sequence belongs to the SRP19 family. As to quaternary structure, fungal signal recognition particle consists of a 7S RNA molecule (scR1) and at least six protein subunits: SRP72, SRP68, SRP54, SEC65, SRP21 and SRP14.

Its subcellular location is the cytoplasm. In terms of biological role, signal-recognition-particle assembly has a crucial role in targeting secretory proteins to the rough endoplasmic reticulum membrane. It must be involved intimately in the translocation of a wide variety of protein substrates. The protein is Signal recognition particle SEC65 subunit (SEC65) of Eremothecium gossypii (strain ATCC 10895 / CBS 109.51 / FGSC 9923 / NRRL Y-1056) (Yeast).